We begin with the raw amino-acid sequence, 346 residues long: Prepilin peptidase EppA (346 aa).

10 helical membrane-spanning segments follow: residues 1 to 21 (MFGFDNLILGVYLFNFLLILT), 31 to 51 (IIPHFVIILMLIVNLPIGYYF), 56 to 76 (AITSFFATLILCLILGVGMGG), 77 to 97 (GDVKMFTALSPLFAAETIYFV), 101 to 121 (ISILIGLSALFAAIFPMTKIL), 128 to 148 (IIPSSAYLAMLIGIIVSITEI), 149 to 169 (YSIGNTKTILWSYIILSIFIS), 182 to 202 (LGYITPIYLIGFYLLNPAYFV), 206 to 226 (VLISFFVYIGQLSLISLVIYA), and 321 to 341 (PFVPFVLVAYCVITLLNMGVI).

Belongs to the peptidase A24 family.

Its subcellular location is the cell membrane. In terms of biological role, peptidase that processes the N-terminus of prepilins. Specifically cleaves proteins with a class III (type IV pilin-like) signal sequence, such as the major structural pilin EpdE and the minor pilins EpdA, EpdC and EpdD. Is not able to cleave the preflagellin subunit FlaB2. The protein is Prepilin peptidase EppA of Methanococcus maripaludis (strain DSM 14266 / JCM 13030 / NBRC 101832 / S2 / LL).